We begin with the raw amino-acid sequence, 148 residues long: Large ribosomal subunit protein uL22c (148 aa).

The protein belongs to the universal ribosomal protein uL22 family. Part of the 50S ribosomal subunit.

It localises to the plastid. It is found in the chloroplast. In terms of biological role, this protein binds specifically to 23S rRNA. The globular domain of the protein is located near the polypeptide exit tunnel on the outside of the subunit, while an extended beta-hairpin is found that lines the wall of the exit tunnel in the center of the 70S ribosome. The chain is Large ribosomal subunit protein uL22c (rpl22) from Triticum aestivum (Wheat).